A 7158-amino-acid chain; its full sequence is Twitchin (7158 aa).

Ig-like domains lie at 5-97 (PRFT…INLN) and 111-204 (PSFV…LALN). Intrachain disulfides connect Cys-25/Cys-81 and Cys-132/Cys-188. Disordered regions lie at residues 204-381 (NFEE…PIVL), 473-639 (EEEL…TKLR), 658-732 (KKVK…DSMA), and 763-955 (EVKE…IDMR). A compositionally biased stretch (low complexity) spans 220–238 (TASPRPSSRGPGSRPSSPK). 2 stretches are compositionally biased toward basic and acidic residues: residues 242 to 259 (KSRE…EGSP) and 279 to 291 (ESRR…KMEV). Low complexity-rich tracts occupy residues 319–340 (SPST…RKGS) and 347–368 (SGTT…ASSD). The Ig-like 3 domain maps to 377–466 (PPIVLEASRS…GEGQSSAMVK (90 aa)). Over residues 504-513 (RVARRSKSKS) the composition is skewed to basic residues. Residues 514 to 523 (KSPAPQAKKS) show a composition bias toward low complexity. Basic and acidic residues-rich tracts occupy residues 529–540 (GRQEASEVEHKR) and 601–618 (KTDS…DTLL). Positions 620–630 (KTTTSTKNESS) are enriched in low complexity. Residues 718 to 764 (VKSGAGGLEKSDSMASLKKLDLKKGKIDDNSDGAFKVQLKKVVKKEV) form a Kelch 1 repeat. 4 stretches are compositionally biased toward basic and acidic residues: residues 763-813 (EVKE…DKPK), 837-850 (KEVE…ELKA), 885-897 (KAHD…EGIK), and 917-955 (SESR…IDMR). One can recognise an Ig-like 4 domain in the interval 980–1072 (PKIVEVPENV…DSADVKLLVT (93 aa)). Residues 1088–1118 (SQAGFQKDGEGGGAGGGGGEKKPMTEAERRQ) are disordered. A compositionally biased stretch (basic and acidic residues) spans 1106 to 1118 (GEKKPMTEAERRQ). Ig-like domains lie at 1122–1213 (PGKK…AQLT), 1217–1306 (PPMK…SKVQ), and 1312–1398 (PRHT…AQLI). An intrachain disulfide couples Cys-1150 to Cys-1201. Fibronectin type-III domains follow at residues 1598-1690 (PKGP…AKNP), 1696-1791 (KPKN…MKAK), 1891-1988 (PPKG…IKDP), 1994-2087 (KPGR…AKPK), 2189-2282 (PNGP…AKNP), 2288-2383 (KTGT…AKPR), 2483-2576 (PLGP…AKNP), and 2579-2675 (VPGK…AKPR). Residues 2014–2058 (PPHKDGGAPIEEYIVEVRDPDTKEWKEVKRVPDTNASISGLKEGK) form a Kelch 2 repeat. The Ig-like 8 domain maps to 2086–2181 (PKFIPAWLKH…GADEEKANLT (96 aa)). One copy of the Kelch 3 repeat lies at 2207–2253 (WKPPDDDGGEPIEYYEVEKLDTATGRWVPCAKVKDTKAHIDGLKKGQ). Residues 2266–2287 (GASDALSTDKDTKAKNPYDEPG) show a composition bias toward basic and acidic residues. A disordered region spans residues 2266-2295 (GASDALSTDKDTKAKNPYDEPGKTGTPDVV). A Kelch 4 repeat occupies 2502 to 2547 (KVPEDDGGAPIDHYEIEKMDLATGRWVPCGRSETTKTTVPNLQPGH). One can recognise an Ig-like 9 domain in the interval 2679-2763 (PRIHREDLSD…TNINGTDSVT (85 aa)). Fibronectin type-III domains follow at residues 2775–2868 (PKGP…AKNP) and 2874–2968 (RPGR…AKPR). The stretch at 2793–2839 (WKPPEDDGGEPIEFYEIEKMNTKDGIWVPCGRSGDTHFTVDSLNKGD) is one Kelch 5 repeat. The segment at 2849 to 2901 (NSEGPSDPLETETDILAKNPFDRPDRPGRPEPTDWDSDHVDLKWDPPLSDGGA) is disordered. Over residues 2868–2892 (PFDRPDRPGRPEPTDWDSDHVDLKW) the composition is skewed to basic and acidic residues. An Ig-like 10 domain is found at 2972 to 3062 (PHIDRDALKN…GEDEATVKIN (91 aa)). Fibronectin type-III domains follow at residues 3070–3165 (PNGP…AKDP) and 3171–3265 (KTNA…AKAR). One copy of the Kelch 6 repeat lies at 3089–3134 (RAPDDDGGIPIENYVIEKYDTASGRWVPAAKVAGDKTTAVVDGLIP). The Ig-like 11 domain occupies 3268-3358 (PPVIDRNSIQ…GTDTAEVKVT (91 aa)). Fibronectin type-III domains are found at residues 3365-3459 (SPRG…AKDP) and 3465-3559 (KPGT…AKPR). The stretch at 3384–3430 (WKEPEDDGGAEISHYVIEKQDAATGRWTACGESKDTNFHVDDLTQGH) is one Kelch 7 repeat. The region spanning 3563 to 3653 (PKINRDMFVA…GKDEHEVDVN (91 aa)) is the Ig-like 12 domain. Fibronectin type-III domains are found at residues 3661-3753 (PEGP…AKNP), 3759-3853 (APTD…AKPR), 3954-4047 (PEGP…AKNQ), 4053-4146 (PVDK…TKAR), 4246-4340 (PEGP…AKDP), and 4346-4440 (KPGR…TAKP). The Kelch 8 repeat unit spans residues 3972–4018 (WKPPTDNGGTDVLHYIVEKMDTSRGTWQEVGTFPDCTAKVNKLVPGK). Kelch repeat units lie at residues 4265 to 4310 (KPPK…LTEG) and 4365 to 4410 (DPPR…RVQK). The Ig-like 13 domain maps to 4445 to 4531 (PKFDLDLDGK…GEAEANIKIT (87 aa)). Fibronectin type-III domains follow at residues 4538 to 4631 (APEN…IKDP), 4637 to 4733 (APST…CRPY), 4739 to 4834 (APDA…IEEQ), 4936 to 5028 (PTGP…AKNP), 5034 to 5129 (APGQ…ADNA), 5231 to 5326 (SPQH…VAKY), 5333 to 5427 (QPEA…LKSR), and 5430 to 5528 (PPGP…IQES). The stretch at 4557–4602 (DAPKDDGGAEIAGYKIEYQEVGSQIWDKVPGLISGTAYTVRGLEHG) is one Kelch 11 repeat. Residues 5287–5335 (LNYTVGGLIKDNRYRFRVRAETQYGVSEPCELADVVVAKYQFEVPNQPE) form a Kelch 12 repeat. The Ig-like 14 domain occupies 5533 to 5621 (PQIVVKPEDT…GSDTATANLV (89 aa)). Fibronectin type-III domains are found at residues 5723–5817 (PQGP…ARLP) and 5823–5919 (SPLN…ASGS). Residues 5742–5787 (RPPVTDGGSKITSYVVEKRDLSKDEWVTVTSNVKDMNYIVTGLFEN) form a Kelch 13 repeat. Ig-like domains follow at residues 5923–6011 (PKIV…ANLR) and 6016–6107 (PRVF…VNVT). Cys-5944 and Cys-5995 form a disulfide bridge. A Fibronectin type-III 31 domain is found at 6114–6207 (PPRFPIIENI…PTAPVLIPGD (94 aa)). The Protein kinase domain occupies 6261-6516 (YDIHEELGTG…IHQALEHPWL (256 aa)). Residues 6267-6275 (LGTGAFGVV) and Lys-6290 contribute to the ATP site. The Proton acceptor role is filled by Asp-6382. The tract at residues 6517 to 6581 (TPGNAPGRDS…SIRDAFWDRS (65 aa)) is C-terminal regulatory domain (CDR). 5 Ig-like domains span residues 6585–6673 (PRFI…VFLN), 6696–6795 (PRVE…CVLT), 6863–6952 (PSFT…ATLT), 6958–7059 (PLLN…ASLV), and 7067–7149 (PPVT…KAIA).

The protein belongs to the protein kinase superfamily. CAMK Ser/Thr protein kinase family. In terms of assembly, may interact (via protein kinase and CRD domains) with mak-1 (via protein kinase domain). Mg(2+) serves as cofactor. Phosphorylated by mak-1 on the protein kinase domain and/or CDR domain in vitro. In terms of tissue distribution, expressed in body wall, anal, vulval, and pharyngeal muscles (at protein level).

It localises to the cytoplasm. Its subcellular location is the myofibril. The protein localises to the sarcomere. It is found in the a band. It catalyses the reaction L-seryl-[protein] + ATP = O-phospho-L-seryl-[protein] + ADP + H(+). The catalysed reaction is L-threonyl-[protein] + ATP = O-phospho-L-threonyl-[protein] + ADP + H(+). Forces generated by the contraction/relaxation cycles of muscle activity separate the regulatory domain from the catalytic core, activating the enzyme. At rest, the kinase domain is in a closed conformation. The active site is occupied by the autoinhibitory region (CDR), which makes extensive contact with the catalytic site, blocking substrate binding. At low forces the regulatory tail will unravel reversibly and expose the active site to its substrates, potentially stabilized by binding of Ca/CALM. At high forces the kinase begins to unfold and the integrity of the active site is disrupted. Its function is as follows. Regulator of muscle contraction and relaxation. Senses mechanical strain that occurs during muscle activity by unfolding in clearly resolvable steps at differing forces. Plays a role in the organization of sarcomeres in body wall muscles. The chain is Twitchin from Caenorhabditis elegans.